Consider the following 179-residue polypeptide: Putative ankyrin repeat protein RF_0922 (179 aa).

5 ANK repeats span residues 5-34 (KGCT…EQAI), 40-72 (NGST…INHV), 75-104 (NGNT…SQAI), 110-139 (NGDT…EQAI), and 145-174 (NGNT…KQAI).

The chain is Putative ankyrin repeat protein RF_0922 from Rickettsia felis (strain ATCC VR-1525 / URRWXCal2) (Rickettsia azadi).